The chain runs to 271 residues: Acyl-[acyl-carrier-protein]--UDP-N-acetylglucosamine O-acyltransferase (271 aa).

The protein belongs to the transferase hexapeptide repeat family. LpxA subfamily. In terms of assembly, homotrimer.

The protein localises to the cytoplasm. The catalysed reaction is a (3R)-hydroxyacyl-[ACP] + UDP-N-acetyl-alpha-D-glucosamine = a UDP-3-O-[(3R)-3-hydroxyacyl]-N-acetyl-alpha-D-glucosamine + holo-[ACP]. It participates in glycolipid biosynthesis; lipid IV(A) biosynthesis; lipid IV(A) from (3R)-3-hydroxytetradecanoyl-[acyl-carrier-protein] and UDP-N-acetyl-alpha-D-glucosamine: step 1/6. Involved in the biosynthesis of lipid A, a phosphorylated glycolipid that anchors the lipopolysaccharide to the outer membrane of the cell. The protein is Acyl-[acyl-carrier-protein]--UDP-N-acetylglucosamine O-acyltransferase of Sulfurihydrogenibium sp. (strain YO3AOP1).